A 2968-amino-acid polypeptide reads, in one-letter code: Polyketide synthase 37 (2968 aa).

The Ketosynthase family 3 (KS3) domain maps to 32–454 (KEPIAIIGIG…GSNSSLFLSS (423 aa)). Catalysis depends on for beta-ketoacyl synthase activity residues Cys198, His338, and His378. Residues 624-950 (FIFSGQGQQW…LSTLSKNSNS (327 aa)) form a malonyl-CoA:ACP transacylase (MAT) domain region. Catalysis depends on Ser718, which acts as the For malonyltransferase activity. The N-terminal hotdog fold stretch occupies residues 1017–1157 (PPMFISLDRK…GIIKYGTNYL (141 aa)). The PKS/mFAS DH domain maps to 1017-1350 (PPMFISLDRK…FKGINSSSSS (334 aa)). Positions 1031 to 1345 (TPSFEVRLNQ…LTNLEFKGIN (315 aa)) are dehydratase (DH) domain. His1049 (proton acceptor; for dehydratase activity) is an active-site residue. The C-terminal hotdog fold stretch occupies residues 1183 to 1350 (FKSFNSNEFY…FKGINSSSSS (168 aa)). The active-site Proton donor; for dehydratase activity is Asp1257. The disordered stretch occupies residues 1522–1547 (SCGGGGGSTNNTISNSSSSISSIDNG). Over residues 1530–1547 (TNNTISNSSSSISSIDNG) the composition is skewed to low complexity. The enoyl reductase (ER) domain stretch occupies residues 1718-2053 (GIISDLKIKQ…SGNHIGKILI (336 aa)). Residues 2083-2277 (TYIFTGFGGL…LKSSCIHLAS (195 aa)) are ketoreductase (KR) domain. The tract at residues 2379-2400 (GDGSFDDLNQLEDEGQQGFGNG) is disordered. Residues 2421 to 2498 (FDNDFYTKSI…STVELIKNKL (78 aa)) enclose the Carrier domain. Position 2458 is an O-(pantetheine 4'-phosphoryl)serine (Ser2458). The tract at residues 2568–2589 (SSSSNNSNSKNELTSPPPSAKR) is disordered. Residues 2707–2968 (ISHVVGVTST…IEAILFKLIK (262 aa)) are chalcone synthase. Cys2747 is an active-site residue.

The cofactor is pantetheine 4'-phosphate.

It catalyses the reaction (E)-4-coumaroyl-CoA + 3 malonyl-CoA + 3 H(+) = 2',4,4',6'-tetrahydroxychalcone + 3 CO2 + 4 CoA. It carries out the reaction hexanoyl-CoA + 3 malonyl-CoA + 3 H(+) = 2,4,6-trihydroxyphenylhexan-1-one + 3 CO2 + 4 CoA. It participates in secondary metabolite biosynthesis; flavonoid biosynthesis. In terms of biological role, polyketide synthase; part of the gene cluster that mediates the biosynthesis of DIF-1 (Differentiation Inducing Factor-1), a signal molecule involved in the differentiation of pstO (prestalk-O) cells. The three-step process begins with the formation of (2,4,6-trihydroxyphenyl)-1-hexan-1-one (THPH) by the polyketide synthase StlB. THPH is then dichlorinated by the flavin-dependent halogenase ChlA. The last step of DIF-1 biosynthesis is the O-methylation of dichloro-THPH (or des-methyl-DIF-1) by the methyltransferase DmtA to yield DIF-1. The protein is Polyketide synthase 37 (StlB) of Dictyostelium discoideum (Social amoeba).